We begin with the raw amino-acid sequence, 325 residues long: Reticulocalbin-1 (325 aa).

The N-terminal stretch at 1-23 (MARGGRLGLALGLLLALVLALRA) is a signal peptide. An N-linked (GlcNAc...) asparagine; partial glycan is attached at Asn-47. Phosphoserine is present on residues Ser-49 and Ser-74. EF-hand domains follow at residues 73 to 108 (ESKE…VQKR), 109 to 144 (YIYD…YYLG), 160 to 195 (KMLP…EEFE), 197 to 232 (MKEI…HEDN), 238 to 273 (WVLS…QDYD), and 274 to 309 (HAQA…FVGS). Residues Asp-86, Asp-88, Asp-90, Glu-97, Asp-122, Asp-124, Asp-126, Lys-128, Glu-133, Asp-173, Asp-175, Asp-177, Thr-179, Glu-184, Asp-210, Asn-212, Asp-214, Glu-221, Asp-251, Asn-253, Asp-255, Lys-257, Glu-262, Asp-287, Asn-289, Asp-291, Met-293, and Glu-298 each contribute to the Ca(2+) site. Positions 322–325 (HDEL) match the Prevents secretion from ER motif.

The protein belongs to the CREC family. Post-translationally, O-glycosylated. O-mannosylated by POMT1 and POMT2 and elongated by POMGNT1.

The protein resides in the endoplasmic reticulum lumen. Functionally, may regulate calcium-dependent activities in the endoplasmic reticulum lumen or post-ER compartment. The protein is Reticulocalbin-1 (Rcn1) of Mus musculus (Mouse).